Reading from the N-terminus, the 83-residue chain is Cytochrome b559 subunit alpha (83 aa).

Residues Val21–Trp35 traverse the membrane as a helical segment. His23 is a binding site for heme.

It belongs to the PsbE/PsbF family. As to quaternary structure, heterodimer of an alpha subunit and a beta subunit. PSII is composed of 1 copy each of membrane proteins PsbA, PsbB, PsbC, PsbD, PsbE, PsbF, PsbH, PsbI, PsbJ, PsbK, PsbL, PsbM, PsbT, PsbX, PsbY, PsbZ, Psb30/Ycf12, at least 3 peripheral proteins of the oxygen-evolving complex and a large number of cofactors. It forms dimeric complexes. Heme b serves as cofactor.

Its subcellular location is the plastid. The protein localises to the chloroplast thylakoid membrane. Functionally, this b-type cytochrome is tightly associated with the reaction center of photosystem II (PSII). PSII is a light-driven water:plastoquinone oxidoreductase that uses light energy to abstract electrons from H(2)O, generating O(2) and a proton gradient subsequently used for ATP formation. It consists of a core antenna complex that captures photons, and an electron transfer chain that converts photonic excitation into a charge separation. This Oenothera berteroana (Bertero's evening primrose) protein is Cytochrome b559 subunit alpha.